A 196-amino-acid chain; its full sequence is Molybdenum cofactor guanylyltransferase (196 aa).

Residues 10 to 12, Lys-23, Asn-51, Asp-69, and Asp-99 each bind GTP; that span reads LAG. Asp-99 is a binding site for Mg(2+).

It belongs to the MobA family. As to quaternary structure, monomer. Mg(2+) serves as cofactor.

The protein resides in the cytoplasm. The enzyme catalyses Mo-molybdopterin + GTP + H(+) = Mo-molybdopterin guanine dinucleotide + diphosphate. Functionally, transfers a GMP moiety from GTP to Mo-molybdopterin (Mo-MPT) cofactor (Moco or molybdenum cofactor) to form Mo-molybdopterin guanine dinucleotide (Mo-MGD) cofactor. This is Molybdenum cofactor guanylyltransferase from Shewanella amazonensis (strain ATCC BAA-1098 / SB2B).